A 127-amino-acid polypeptide reads, in one-letter code: Mitochondrial pyruvate carrier 2 (127 aa).

Residues 2–40 (SAAGARGLRATYHRLLDKVELMLPEKLRPLYNHPAGPRT) lie on the Mitochondrial matrix side of the membrane. A helical transmembrane segment spans residues 41 to 61 (VFFWAPIMKRGLVCAGLADMA). Over 62–72 (RPAEKLSTAQS) the chain is Mitochondrial intermembrane. Residues 73-90 (AVLMATGFIWSRYSLVII) form a helical membrane-spanning segment. Over 91–95 (PKNWS) the chain is Mitochondrial matrix. Residues 96–115 (LFAVNFFVGAAGASQLFRIW) form a helical membrane-spanning segment. Residues 116-127 (RYNQELKAKAHK) are Mitochondrial intermembrane-facing.

It belongs to the mitochondrial pyruvate carrier (MPC) (TC 2.A.105) family. Homodimer. Homooligomer. Forms heterodimers with MPC1 and MPC1L. The heterodimer is the more stable and dominant form.

It is found in the mitochondrion inner membrane. It carries out the reaction pyruvate(out) + H(+)(out) = pyruvate(in) + H(+)(in). Functionally, mediates the uptake of pyruvate into mitochondria. This Pongo abelii (Sumatran orangutan) protein is Mitochondrial pyruvate carrier 2 (MPC2).